The sequence spans 1710 residues: Neurexin-2 (1710 aa).

The first 28 residues, 1–28, serve as a signal peptide directing secretion; the sequence is MALGSRWQPPPQLPPLLLLLALAAGVRG. Positions 29–206 constitute a Laminin G-like 1 domain; sequence LEFGGGPGQW…LRGAAADPLC (178 aa). At 29–1634 the chain is on the extracellular side; it reads LEFGGGPGQW…EVIRESSSTT (1606 aa). The N-linked (GlcNAc...) asparagine glycan is linked to Asn60. The EGF-like 1 domain maps to 202–242; it reads ADPLCAPARNPCANGGLCTVLAPGEVGCDCSHTGFGGKFCS. Intrachain disulfides connect Cys206-Cys219, Cys213-Cys229, and Cys231-Cys241. 2 Laminin G-like domains span residues 289–486 and 493–686; these read VATF…SFRC and DPVT…APFC. Asp335 serves as a coordination point for Ca(2+). An N-linked (GlcNAc...) asparagine glycan is attached at Asn338. The Ca(2+) site is built by Leu352 and Met420. 5 disulfides stabilise this stretch: Cys450–Cys486, Cys657–Cys686, Cys694–Cys705, Cys699–Cys714, and Cys716–Cys726. Residues 690-727 enclose the EGF-like 2 domain; sequence TLKQCASAPCRNGGICREGWNRFVCDCIGTGFLGRVCE. 2 consecutive Laminin G-like domains span residues 732 to 904 and 918 to 1093; these read VLSY…ITYC and DPVT…ERGC. Asp779 and Leu796 together coordinate Ca(2+). Asn841 is a glycosylation site (N-linked (GlcNAc...) asparagine). Arg854 contributes to the Ca(2+) binding site. 4 disulfides stabilise this stretch: Cys1065–Cys1093, Cys1100–Cys1111, Cys1105–Cys1120, and Cys1122–Cys1132. The region spanning 1096-1133 is the EGF-like 3 domain; that stretch reads PSTTCTEESCANQGVCLQQWDGFTCDCTMTSYGGPVCN. Residues 1137–1345 enclose the Laminin G-like 6 domain; it reads TTYIFGKGGA…HLRLVGEGPS (209 aa). Residues Asp1189, Val1206, Ile1288, and Asn1290 each contribute to the Ca(2+) site. Ser1400 carries O-linked (Xyl...) (heparan sulfate) serine glycosylation. 2 disordered regions span residues 1458 to 1508 and 1587 to 1621; these read ATQD…LPPT and EPRR…RGPP. Residues 1635 to 1655 form a helical membrane-spanning segment; sequence GMVVGIVAAAALCILILLYAM. Over 1656–1710 the chain is Cytoplasmic; it reads YKYRNRDEGSYQVDQSRNYISNSAQSNGAVVKEKAPAAPKTPSKAKKNKDKEYYV. Positions 1677-1710 are disordered; it reads NSAQSNGAVVKEKAPAAPKTPSKAKKNKDKEYYV.

In terms of assembly, the laminin G-like domain 1 binds to NXPH1. Interacts with PATJ. Interacts with CBLN1, CBLN2 and, less avidly, with CBLN4. Specific isoforms bind neuroligins NLGN1, NLGN2 and NLGN3. Specific isoforms bind to alpha-dystroglycan. Interacts (via Laminin G-like 1 domain) with IGSF21 (Ig-like 1 domain) in a trans-interaction manner. Interacts with CLSTN3. Post-translationally, O-glycosylated; contains heparan sulfate. Heparan sulfate attachment is required for synapse development by mediating interactions with neuroligins.

It is found in the presynaptic cell membrane. Neuronal cell surface protein that may be involved in cell recognition and cell adhesion. May mediate intracellular signaling. The chain is Neurexin-2 from Mus musculus (Mouse).